We begin with the raw amino-acid sequence, 317 residues long: Acetyl-coenzyme A carboxylase carboxyl transferase subunit alpha (317 aa).

The CoA carboxyltransferase C-terminal domain maps to 37-292 (EINKKLEQTK…ADYITKGYNE (256 aa)).

The protein belongs to the AccA family. Acetyl-CoA carboxylase is a heterohexamer composed of biotin carboxyl carrier protein (AccB), biotin carboxylase (AccC) and two subunits each of ACCase subunit alpha (AccA) and ACCase subunit beta (AccD).

The protein localises to the cytoplasm. It carries out the reaction N(6)-carboxybiotinyl-L-lysyl-[protein] + acetyl-CoA = N(6)-biotinyl-L-lysyl-[protein] + malonyl-CoA. It functions in the pathway lipid metabolism; malonyl-CoA biosynthesis; malonyl-CoA from acetyl-CoA: step 1/1. Functionally, component of the acetyl coenzyme A carboxylase (ACC) complex. First, biotin carboxylase catalyzes the carboxylation of biotin on its carrier protein (BCCP) and then the CO(2) group is transferred by the carboxyltransferase to acetyl-CoA to form malonyl-CoA. The protein is Acetyl-coenzyme A carboxylase carboxyl transferase subunit alpha of Flavobacterium johnsoniae (strain ATCC 17061 / DSM 2064 / JCM 8514 / BCRC 14874 / CCUG 350202 / NBRC 14942 / NCIMB 11054 / UW101) (Cytophaga johnsonae).